A 310-amino-acid chain; its full sequence is ADP-L-glycero-D-manno-heptose-6-epimerase (310 aa).

NADP(+) is bound by residues 10–11 (FI), 31–32 (DN), Lys38, Lys53, 75–79 (EGACS), and Asn92. Tyr140 (proton acceptor) is an active-site residue. Position 144 (Lys144) interacts with NADP(+). Asn169 contacts substrate. Residues Val170 and Lys178 each contribute to the NADP(+) site. The Proton acceptor role is filled by Lys178. Substrate contacts are provided by residues Gly180, His187, 201–204 (FAGS), Arg209, and Tyr272.

The protein belongs to the NAD(P)-dependent epimerase/dehydratase family. HldD subfamily. Homopentamer. The cofactor is NADP(+).

It carries out the reaction ADP-D-glycero-beta-D-manno-heptose = ADP-L-glycero-beta-D-manno-heptose. It participates in nucleotide-sugar biosynthesis; ADP-L-glycero-beta-D-manno-heptose biosynthesis; ADP-L-glycero-beta-D-manno-heptose from D-glycero-beta-D-manno-heptose 7-phosphate: step 4/4. Its function is as follows. Catalyzes the interconversion between ADP-D-glycero-beta-D-manno-heptose and ADP-L-glycero-beta-D-manno-heptose via an epimerization at carbon 6 of the heptose. This is ADP-L-glycero-D-manno-heptose-6-epimerase from Sodalis glossinidius (strain morsitans).